The chain runs to 499 residues: Lysine--tRNA ligase (499 aa).

Glu-409 and Glu-416 together coordinate Mg(2+).

This sequence belongs to the class-II aminoacyl-tRNA synthetase family. As to quaternary structure, homodimer. The cofactor is Mg(2+).

It is found in the cytoplasm. The catalysed reaction is tRNA(Lys) + L-lysine + ATP = L-lysyl-tRNA(Lys) + AMP + diphosphate. The protein is Lysine--tRNA ligase of Thioalkalivibrio sulfidiphilus (strain HL-EbGR7).